The chain runs to 446 residues: Probable D-serine dehydratase (446 aa).

Lys-116 carries the post-translational modification N6-(pyridoxal phosphate)lysine.

It belongs to the serine/threonine dehydratase family. DsdA subfamily. Pyridoxal 5'-phosphate is required as a cofactor.

The catalysed reaction is D-serine = pyruvate + NH4(+). This is Probable D-serine dehydratase from Bacillus anthracis (strain CDC 684 / NRRL 3495).